The primary structure comprises 108 residues: Phosphoribosyl-ATP pyrophosphatase (108 aa).

Belongs to the PRA-PH family.

Its subcellular location is the cytoplasm. The catalysed reaction is 1-(5-phospho-beta-D-ribosyl)-ATP + H2O = 1-(5-phospho-beta-D-ribosyl)-5'-AMP + diphosphate + H(+). The protein operates within amino-acid biosynthesis; L-histidine biosynthesis; L-histidine from 5-phospho-alpha-D-ribose 1-diphosphate: step 2/9. This is Phosphoribosyl-ATP pyrophosphatase from Trichlorobacter lovleyi (strain ATCC BAA-1151 / DSM 17278 / SZ) (Geobacter lovleyi).